A 295-amino-acid polypeptide reads, in one-letter code: uncharacterized protein (295 aa).

The N-terminal stretch at 1–19 (MRKLLLIITVFFTFNVAQA) is a signal peptide.

This is an uncharacterized protein from Rickettsia conorii (strain ATCC VR-613 / Malish 7).